A 91-amino-acid chain; its full sequence is ATP synthase subunit c (91 aa).

Transmembrane regions (helical) follow at residues 4-24 (FTMCVLAAGIGMALGTLGTGI) and 53-73 (IGLAMIESLAIYALVVCLIIL).

It belongs to the ATPase C chain family. F-type ATPases have 2 components, F(1) - the catalytic core - and F(0) - the membrane proton channel. F(1) has five subunits: alpha(3), beta(3), gamma(1), delta(1), epsilon(1). F(0) has three main subunits: a(1), b(2) and c(10-14). The alpha and beta chains form an alternating ring which encloses part of the gamma chain. F(1) is attached to F(0) by a central stalk formed by the gamma and epsilon chains, while a peripheral stalk is formed by the delta and b chains.

It is found in the cell inner membrane. Functionally, f(1)F(0) ATP synthase produces ATP from ADP in the presence of a proton or sodium gradient. F-type ATPases consist of two structural domains, F(1) containing the extramembraneous catalytic core and F(0) containing the membrane proton channel, linked together by a central stalk and a peripheral stalk. During catalysis, ATP synthesis in the catalytic domain of F(1) is coupled via a rotary mechanism of the central stalk subunits to proton translocation. In terms of biological role, key component of the F(0) channel; it plays a direct role in translocation across the membrane. A homomeric c-ring of between 10-14 subunits forms the central stalk rotor element with the F(1) delta and epsilon subunits. The protein is ATP synthase subunit c of Geotalea uraniireducens (strain Rf4) (Geobacter uraniireducens).